The following is a 160-amino-acid chain: Lipoprotein signal peptidase (160 aa).

2 consecutive transmembrane segments (helical) span residues 59-79 (PEGI…YVWI) and 84-104 (SPLF…NLID). Residues Asp-113 and Asp-139 contribute to the active site. The helical transmembrane segment at 132 to 152 (WPIFNIADACITIGACLLFFF) threads the bilayer.

Belongs to the peptidase A8 family.

It is found in the cell inner membrane. It carries out the reaction Release of signal peptides from bacterial membrane prolipoproteins. Hydrolyzes -Xaa-Yaa-Zaa-|-(S,diacylglyceryl)Cys-, in which Xaa is hydrophobic (preferably Leu), and Yaa (Ala or Ser) and Zaa (Gly or Ala) have small, neutral side chains.. The protein operates within protein modification; lipoprotein biosynthesis (signal peptide cleavage). Functionally, this protein specifically catalyzes the removal of signal peptides from prolipoproteins. This chain is Lipoprotein signal peptidase, found in Chlorobaculum parvum (strain DSM 263 / NCIMB 8327) (Chlorobium vibrioforme subsp. thiosulfatophilum).